The primary structure comprises 38 residues: Alpha-2-macroglobulin homolog (38 aa).

The segment at residues 27 to 30 (CGEQ) is a cross-link (isoglutamyl cysteine thioester (Cys-Gln)).

It belongs to the protease inhibitor I39 (alpha-2-macroglobulin) family. As to quaternary structure, homodimer; disulfide-linked. In terms of tissue distribution, hemolymph.

The protein resides in the secreted. Is able to inhibit all four classes of proteinases by a unique 'trapping' mechanism. This protein has a peptide stretch, called the 'bait region' which contains specific cleavage sites for different proteinases. When a proteinase cleaves the bait region, a conformational change is induced in the protein which traps the proteinase. The entrapped enzyme remains active against low molecular weight substrates (activity against high molecular weight substrates is greatly reduced). Following cleavage in the bait region a thioester bond is hydrolyzed and mediates the covalent binding of the protein to the proteinase. The chain is Alpha-2-macroglobulin homolog from Homarus americanus (American lobster).